Here is a 430-residue protein sequence, read N- to C-terminus: uncharacterized protein (430 aa).

12 helical membrane passes run 36–56 (LFVV…GVTV), 69–89 (AFAG…ALIV), 100–122 (TGLS…AAII), 126–148 (FLLF…ARYA), 160–180 (TAVS…PSLV), 197–217 (GPFI…FIML), 253–273 (IIVG…IMTM), 285–305 (LGAV…PSLV), 317–337 (AMAI…AFAP), 340–360 (SMIL…FGLI), 384–404 (VLIA…VAGS), and 406–426 (YLAL…VVVW).

Belongs to the major facilitator superfamily.

Its subcellular location is the cell membrane. This is an uncharacterized protein from Bacillus subtilis (strain 168).